A 332-amino-acid chain; its full sequence is Methionyl-tRNA formyltransferase (332 aa).

Position 124–127 (124–127 (SLLP)) interacts with (6S)-5,6,7,8-tetrahydrofolate.

Belongs to the Fmt family.

The enzyme catalyses L-methionyl-tRNA(fMet) + (6R)-10-formyltetrahydrofolate = N-formyl-L-methionyl-tRNA(fMet) + (6S)-5,6,7,8-tetrahydrofolate + H(+). Functionally, attaches a formyl group to the free amino group of methionyl-tRNA(fMet). The formyl group appears to play a dual role in the initiator identity of N-formylmethionyl-tRNA by promoting its recognition by IF2 and preventing the misappropriation of this tRNA by the elongation apparatus. In Polynucleobacter necessarius subsp. necessarius (strain STIR1), this protein is Methionyl-tRNA formyltransferase.